A 56-amino-acid polypeptide reads, in one-letter code: Botcinic acid biosynthesis cluster B protein 14 (56 aa).

It participates in polyketide biosynthesis. Its function is as follows. Part of the gene cluster B that mediates the biosynthesis of botcinic acid and its botcinin derivatives, acetate-derived polyketides that contribute to virulence when combined with the sesquiterpene botrydial. Botcinic acid and its derivatives have been shown to induce chlorosis and necrosis during host plant infection, but also have antifungal activities. Two polyketide synthases, BOA6 and BOA9, are involved in the biosynthesis of botcinins. BOA6 mediates the formation of the per-methylated tetraketide core by condensation of four units of malonyl-CoA with one unit of acetyl-CoA, which would be methylated in activated methylene groups to yield a bicyclic acid intermediate that could then either be converted to botrylactone derivatives or lose the starter acetate unit through a retro-Claisen type C-C bond cleavage to yield botcinin derivatives. The second polyketide synthase, BOA9, is probably required for the biosynthesis of the tetraketide side chain of botcinins. The methyltransferase (MT) domain within BOA6 is probably responsible for the incorporation of four methyl groups. The trans-enoyl reductase BOA5 might take over the enoyl reductase function of BOA6 that misses an ER domain. The monooxygenases BOA2, BOA3 and BOA4 might be involved in further hydroxylations at C4, C5 and C8, whereas BOA7, close to BOA9, could potentially be involved in the hydroxylation at C4 in the side chain of botcinins. In Botryotinia fuckeliana (strain B05.10) (Noble rot fungus), this protein is Botcinic acid biosynthesis cluster B protein 14.